An 823-amino-acid polypeptide reads, in one-letter code: Lon protease (823 aa).

Residues Ile-51 to Tyr-246 form the Lon N-terminal domain. Gly-397–Thr-404 contacts ATP. The region spanning Asn-633–Arg-815 is the Lon proteolytic domain. Active-site residues include Ser-721 and Lys-764.

It belongs to the peptidase S16 family. In terms of assembly, homohexamer. Organized in a ring with a central cavity.

Its subcellular location is the cytoplasm. The enzyme catalyses Hydrolysis of proteins in presence of ATP.. In terms of biological role, ATP-dependent serine protease that mediates the selective degradation of mutant and abnormal proteins as well as certain short-lived regulatory proteins. Required for cellular homeostasis and for survival from DNA damage and developmental changes induced by stress. Degrades polypeptides processively to yield small peptide fragments that are 5 to 10 amino acids long. Binds to DNA in a double-stranded, site-specific manner. In Parabacteroides distasonis (strain ATCC 8503 / DSM 20701 / CIP 104284 / JCM 5825 / NCTC 11152), this protein is Lon protease.